A 349-amino-acid chain; its full sequence is tRNA pseudouridine synthase D (349 aa).

Residue Phe-27 coordinates substrate. Residue Asp-80 is the Nucleophile of the active site. Asn-129 is a binding site for substrate. One can recognise a TRUD domain in the interval 155–303; that stretch reads GVPNYFGAQR…VEAARRAMLL (149 aa). A substrate-binding site is contributed by Phe-329.

This sequence belongs to the pseudouridine synthase TruD family.

It carries out the reaction uridine(13) in tRNA = pseudouridine(13) in tRNA. Functionally, responsible for synthesis of pseudouridine from uracil-13 in transfer RNAs. The protein is tRNA pseudouridine synthase D of Escherichia coli O7:K1 (strain IAI39 / ExPEC).